A 188-amino-acid polypeptide reads, in one-letter code: Pallidipin (188 aa).

Residues 1-18 (MKVIIAATLLGILMHAFA) form the signal peptide. 3 disulfide bridges follow: C21/C137, C55/C184, and C89/C105.

The protein belongs to the calycin superfamily. Triabin family. Expressed in salivary glands.

It localises to the secreted. Functionally, has been described as a specific inhibitor of collagen-induced platelet aggregation. However, as it does not affect platelet shape change or adhesion, it is plausible that it exerts its antiplatelet activity by a mechanism similar to that of triplatin, moubatin and dipetalodipin as scavenging eicosanoids involved in inflammation such as thromboxane A2 (TXA2). This chain is Pallidipin, found in Meccus pallidipennis (Triatomine bug).